Consider the following 374-residue polypeptide: Methionine import ATP-binding protein MetN 2 (374 aa).

Residues 1-22 form a disordered region; the sequence is MSVATLQRKLPEAAPRRAGQTE. Positions 32-271 constitute an ABC transporter domain; the sequence is VRFIGLGKTY…PQHEVSKTLL (240 aa). 68–75 is an ATP binding site; that stretch reads GRSGAGKS.

The protein belongs to the ABC transporter superfamily. Methionine importer (TC 3.A.1.24) family. The complex is composed of two ATP-binding proteins (MetN), two transmembrane proteins (MetI) and a solute-binding protein (MetQ).

The protein resides in the cell inner membrane. The catalysed reaction is L-methionine(out) + ATP + H2O = L-methionine(in) + ADP + phosphate + H(+). The enzyme catalyses D-methionine(out) + ATP + H2O = D-methionine(in) + ADP + phosphate + H(+). Its function is as follows. Part of the ABC transporter complex MetNIQ involved in methionine import. Responsible for energy coupling to the transport system. This Pseudomonas fluorescens (strain ATCC BAA-477 / NRRL B-23932 / Pf-5) protein is Methionine import ATP-binding protein MetN 2.